The primary structure comprises 380 residues: MLVDKLYALSLSHKRLSVDELSEISRNVHKTCYNVQAFVFHTCNRVEVYLYDADAGPAEHIKRSYGPYVEKVAEFRGVEAARHLFRVAAGLESMLIGETDVLGQLEEAYESQVRRGNLRGLLKTVVERAVAVGKRVRTETGISRGPRGLGSLSIVYLSRRLPLREISVCVIGAGAVGRGVVKELIDAGVRRVAVVNRTVEKAADLGVEVRPLTSENVEWCLREFDVVYTAVSSFEPVVVYVPPGSRVKLVVDLGVPRNTAPNLPVEVVTLDHLRELAEEFNRQRAEEVSKAEKIVEEEVARLEEVLRRRWVELEMSALLKKWFAVAEEEGERAGGGPARLAAMSTVKRTLLPLVNYIKEVAVKDLAVAEGLLQVLKSAYA.

Substrate contacts are provided by residues 42–45 (TCNR), Ser93, 98–100 (ETD), and Gln104. Cys43 functions as the Nucleophile in the catalytic mechanism. 172–177 (GAGAVG) is a binding site for NADP(+).

Belongs to the glutamyl-tRNA reductase family. Homodimer.

It carries out the reaction (S)-4-amino-5-oxopentanoate + tRNA(Glu) + NADP(+) = L-glutamyl-tRNA(Glu) + NADPH + H(+). The protein operates within porphyrin-containing compound metabolism; protoporphyrin-IX biosynthesis; 5-aminolevulinate from L-glutamyl-tRNA(Glu): step 1/2. Functionally, catalyzes the NADPH-dependent reduction of glutamyl-tRNA(Glu) to glutamate 1-semialdehyde (GSA). This is Glutamyl-tRNA reductase 1 from Pyrobaculum calidifontis (strain DSM 21063 / JCM 11548 / VA1).